The primary structure comprises 305 residues: Mycothiol acetyltransferase (305 aa).

N-acetyltransferase domains follow at residues 10 to 153 and 156 to 305; these read DRLD…LVVP and ISLR…YARA. Glu-38 is a 1D-myo-inositol 2-(L-cysteinylamino)-2-deoxy-alpha-D-glucopyranoside binding site. 82-84 is a binding site for acetyl-CoA; that stretch reads LAV. Residues Glu-183, Lys-225, and Glu-238 each contribute to the 1D-myo-inositol 2-(L-cysteinylamino)-2-deoxy-alpha-D-glucopyranoside site. Acetyl-CoA-binding positions include 242–244 and 249–255; these read VAI and QGRGLGR. Residue Tyr-276 coordinates 1D-myo-inositol 2-(L-cysteinylamino)-2-deoxy-alpha-D-glucopyranoside. Acetyl-CoA is bound at residue 281–286; that stretch reads NESALH.

The protein belongs to the acetyltransferase family. MshD subfamily. As to quaternary structure, monomer.

It carries out the reaction 1D-myo-inositol 2-(L-cysteinylamino)-2-deoxy-alpha-D-glucopyranoside + acetyl-CoA = mycothiol + CoA + H(+). In terms of biological role, catalyzes the transfer of acetyl from acetyl-CoA to desacetylmycothiol (Cys-GlcN-Ins) to form mycothiol. The sequence is that of Mycothiol acetyltransferase from Rhodococcus jostii (strain RHA1).